Here is a 692-residue protein sequence, read N- to C-terminus: DNA repair protein RAD34 (692 aa).

The segment at 1–38 (MAKRLLESSQNDQANRKNSKIEKKEVSFYEEEETDDSF) is disordered. The segment covering 28–38 (FYEEEETDDSF) has biased composition (acidic residues).

Belongs to the XPC family.

The protein resides in the nucleus. Functionally, involved in nucleotide excision repair (NER) of damaged ribosomal DNA (rDNA). Required for the repair of the RNA polymerase I-transcribed strand of rDNA. This is DNA repair protein RAD34 (RAD34) from Saccharomyces cerevisiae (strain ATCC 204508 / S288c) (Baker's yeast).